Consider the following 299-residue polypeptide: Oxygen-dependent coproporphyrinogen-III oxidase (299 aa).

Serine 92 contributes to the substrate binding site. Mn(2+)-binding residues include histidine 96 and histidine 106. Histidine 106 acts as the Proton donor in catalysis. Position 108 to 110 (asparagine 108 to arginine 110) interacts with substrate. 2 residues coordinate Mn(2+): histidine 145 and histidine 175. The tract at residues tyrosine 240–glutamate 275 is important for dimerization. Glycine 258 to arginine 260 contacts substrate.

Belongs to the aerobic coproporphyrinogen-III oxidase family. Homodimer. Mn(2+) is required as a cofactor.

It localises to the cytoplasm. It catalyses the reaction coproporphyrinogen III + O2 + 2 H(+) = protoporphyrinogen IX + 2 CO2 + 2 H2O. Its pathway is porphyrin-containing compound metabolism; protoporphyrin-IX biosynthesis; protoporphyrinogen-IX from coproporphyrinogen-III (O2 route): step 1/1. Involved in the heme biosynthesis. Catalyzes the aerobic oxidative decarboxylation of propionate groups of rings A and B of coproporphyrinogen-III to yield the vinyl groups in protoporphyrinogen-IX. The polypeptide is Oxygen-dependent coproporphyrinogen-III oxidase (Escherichia coli O7:K1 (strain IAI39 / ExPEC)).